Here is a 134-residue protein sequence, read N- to C-terminus: uncharacterized protein (134 aa).

The chain crosses the membrane as a helical span at residues 4–24 (NLLILLSLLLVVVAIMWWLYE).

It is found in the membrane. This is an uncharacterized protein from Invertebrate iridescent virus 6 (IIV-6).